Here is a 146-residue protein sequence, read N- to C-terminus: Deoxyuridine 5'-triphosphate nucleotidohydrolase (146 aa).

Residues 65-67 (RSG), Asn-78, 82-84 (LID), and Met-92 contribute to the substrate site.

It belongs to the dUTPase family. Mg(2+) serves as cofactor.

The enzyme catalyses dUTP + H2O = dUMP + diphosphate + H(+). It participates in pyrimidine metabolism; dUMP biosynthesis; dUMP from dCTP (dUTP route): step 2/2. Its function is as follows. This enzyme is involved in nucleotide metabolism: it produces dUMP, the immediate precursor of thymidine nucleotides and it decreases the intracellular concentration of dUTP so that uracil cannot be incorporated into DNA. The sequence is that of Deoxyuridine 5'-triphosphate nucleotidohydrolase from Thiobacillus denitrificans (strain ATCC 25259 / T1).